The sequence spans 20 residues: Probable cinnamyl alcohol dehydrogenase 1 (20 aa).

The protein belongs to the zinc-containing alcohol dehydrogenase family. Requires Zn(2+) as cofactor.

The enzyme catalyses (E)-cinnamyl alcohol + NADP(+) = (E)-cinnamaldehyde + NADPH + H(+). The catalysed reaction is (E)-coniferol + NADP(+) = (E)-coniferaldehyde + NADPH + H(+). It carries out the reaction (E)-sinapyl alcohol + NADP(+) = (E)-sinapaldehyde + NADPH + H(+). It catalyses the reaction (E)-4-coumaroyl alcohol + NADP(+) = (E)-4-coumaraldehyde + NADPH + H(+). The enzyme catalyses (E)-caffeyl alcohol + NADP(+) = (E)-caffeyl aldehyde + NADPH + H(+). It functions in the pathway aromatic compound metabolism; phenylpropanoid biosynthesis. Functionally, involved in lignin biosynthesis. Catalyzes the final step specific for the production of lignin monomers, like coniferyl alcohol, sinapyl alcohol and 4-coumaryl alcohol. The sequence is that of Probable cinnamyl alcohol dehydrogenase 1 from Pseudotsuga menziesii (Douglas-fir).